The chain runs to 1450 residues: Protein clueless (1450 aa).

2 disordered regions span residues 1–126 (MALE…PGSE) and 266–287 (KTRP…VSEP). Residues 29-60 (NNSSAGKKQQQQQQPNQNQNLVNGNGNAADGP) are compositionally biased toward low complexity. Residues 62 to 71 (AKKKGKKNRN) are compositionally biased toward basic residues. Residue serine 271 is modified to Phosphoserine. The 243-residue stretch at 425-667 (RAEDAFSSKL…RTFPPDVNFL (243 aa)) folds into the Clu domain. Basic and acidic residues-rich tracts occupy residues 725-734 (KQSEKTEEKA) and 743-765 (KESS…EEKQ). 2 disordered regions span residues 725-775 (KQSE…TKTA) and 959-1011 (PAVS…SDWT). Residues 968–983 (KKRSNGNKHNKHKSKG) are compositionally biased toward basic residues. Low complexity predominate over residues 984–1008 (NKQQASGNQNGSSAGSSSGGSSSSS). TPR repeat units lie at residues 1102–1135 (AYNF…LNNV), 1228–1261 (ALID…NIKY), and 1263–1296 (GSKA…EKET). The tract at residues 1410–1450 (NNNGDTEAETKDATKDNKDLAGASTQLTNGDKDAETAVASS) is disordered. Basic and acidic residues predominate over residues 1417–1428 (AETKDATKDNKD).

This sequence belongs to the CLU family.

Its subcellular location is the cytoplasm. MRNA-binding protein involved in proper cytoplasmic distribution of mitochondria. The polypeptide is Protein clueless (Drosophila ananassae (Fruit fly)).